We begin with the raw amino-acid sequence, 539 residues long: GMP synthase [glutamine-hydrolyzing] (539 aa).

Residues Lys-4 to Asp-202 form the Glutamine amidotransferase type-1 domain. Residue Cys-81 is the Nucleophile of the active site. Active-site residues include His-176 and Glu-178. In terms of domain architecture, GMPS ATP-PPase spans Trp-203–Arg-395. ATP is bound at residue Ser-230–Ser-236.

Homodimer.

The enzyme catalyses XMP + L-glutamine + ATP + H2O = GMP + L-glutamate + AMP + diphosphate + 2 H(+). It functions in the pathway purine metabolism; GMP biosynthesis; GMP from XMP (L-Gln route): step 1/1. Its function is as follows. Catalyzes the synthesis of GMP from XMP. The polypeptide is GMP synthase [glutamine-hydrolyzing] (Burkholderia pseudomallei (strain 1106a)).